A 238-amino-acid polypeptide reads, in one-letter code: 3,4-dihydroxy-2-butanone 4-phosphate synthase (238 aa).

Residues 26-27 (RE), aspartate 31, 166-170 (RVGQT), and glutamate 190 each bind D-ribulose 5-phosphate. Mg(2+) is bound at residue glutamate 27.

The protein belongs to the DHBP synthase family. In terms of assembly, homodimer. Mg(2+) is required as a cofactor. The cofactor is Mn(2+).

It catalyses the reaction D-ribulose 5-phosphate = (2S)-2-hydroxy-3-oxobutyl phosphate + formate + H(+). It functions in the pathway cofactor biosynthesis; riboflavin biosynthesis; 2-hydroxy-3-oxobutyl phosphate from D-ribulose 5-phosphate: step 1/1. In terms of biological role, catalyzes the conversion of D-ribulose 5-phosphate to formate and 3,4-dihydroxy-2-butanone 4-phosphate. This is 3,4-dihydroxy-2-butanone 4-phosphate synthase from Archaeoglobus fulgidus (strain ATCC 49558 / DSM 4304 / JCM 9628 / NBRC 100126 / VC-16).